We begin with the raw amino-acid sequence, 776 residues long: MRNSRLLLPMAAASATAGITAAAYFPAIFLFILFLLIILIKTRHAFLIIVCFFSFILFFVLYAVTDSQNVSSYRQGTYQFKAVIDTIPKIDGDRMSMMVETPDKEKWAAAYRIQSAGEKEQLLYIEPGMSCELTGTLEEPNHATVPGAFDYNEYLYRQHIHWNYSVTSIQNCSEPENFKYKVLSLRKHIISFTNSLLPPDSTGIVQALTVGDRFYVEDEVLTAYQKLGVVHLLAISGLHVGILTAGLFYIMIRLGITREKASILLLLFLPLYVMLTGAAPSVLRAALMSGVYLAGSLVKWRVRSATAICLSYIVLLLFNPYHLFEAGFQLSFAVSFSLILSSSIFQQVKTSLGQLTIVSLIAQLGSLPILLYHFHQFSIISVPMNMLMVPFYTFCILPGAVAGVLLLSLSASFGRLFFSWFDLLISWINRLITNIADVDVFTIMIAHPAPVLLFLFTVTIILLLMAIEKRSLSQLMVTGGICCTVMFLLFIYPCLSSEGEVDMIDIGQGDSMFVGAPHQRGRVLIDTGGTLSYSSEPWREKQHPFSLGEKVLIPFLTAKGIKQLDALILTHADQDHIGEAEILLKHHKVKRLVIPKGFVSEPKDEKVLQAAREEGVAIEEVKRGDVLQIKDLQFHVLSPEAPDPASKNNSSLVLWMETGGMSWILTGDLEKEGEQEVMNVFPNIKADVLKVGHHGSKGSTGEEFIQQLQPKTAIISAGKNNRYHHPHQKVLQLLQRHSIRVLRTDQNGTIQYRYKNRVGTFSVYPPYDTSDITETN.

10 consecutive transmembrane segments (helical) span residues 19 to 39, 45 to 65, 232 to 252, 263 to 283, 308 to 328, 352 to 372, 387 to 407, 416 to 436, 443 to 463, and 475 to 495; these read ITAA…LIIL, AFLI…YAVT, LLAI…YIMI, ILLL…PSVL, ICLS…EAGF, LGQL…ILLY, LMVP…VLLL, LFFS…TNIA, IMIA…IILL, and LMVT…YPCL.

The protein to H.influenzae REC2, N.gonorrhoeae ComA and E.coli YcaI.

The protein resides in the cell membrane. Its function is as follows. The comE operon is required for the binding and uptake of transforming DNA. ComEC is required for internalization but is dispensable for DNA binding. The sequence is that of ComE operon protein 3 (comEC) from Bacillus subtilis (strain 168).